The sequence spans 83 residues: FELLPSQDRSCCIQKTLECLENYPGQASQRAHYCQQDATTNCPDTYYFGCCPGYATCMSINAGNNVRSAFDKCINRLCFDPGH.

A 4-hydroxyproline; partial mark is found at proline 24 and proline 43. The residue at position 83 (histidine 83) is a Histidine amide.

In terms of assembly, may form a non-covalent dimer. In terms of processing, contains 5 disulfide bonds. As to expression, expressed by the venom duct.

It is found in the secreted. The polypeptide is Conotoxin p21a (Conus purpurascens (Purple cone)).